A 331-amino-acid polypeptide reads, in one-letter code: UPF0194 membrane protein YbhG (331 aa).

A signal peptide spans 1-19 (MKKPVVIGLAIAAIVAVIA). The stretch at 107–208 (EEIAQAAAAV…LDLQDTTLIA (102 aa)) forms a coiled coil.

It belongs to the UPF0194 family.

Its subcellular location is the periplasm. The polypeptide is UPF0194 membrane protein YbhG (Salmonella gallinarum (strain 287/91 / NCTC 13346)).